We begin with the raw amino-acid sequence, 402 residues long: 1-deoxy-D-xylulose 5-phosphate reductoisomerase (402 aa).

Residues threonine 10, glycine 11, serine 12, isoleucine 13, glycine 36, arginine 37, asparagine 38, and asparagine 124 each coordinate NADPH. A 1-deoxy-D-xylulose 5-phosphate-binding site is contributed by lysine 125. Residue glutamate 126 coordinates NADPH. Aspartate 150 is a binding site for Mn(2+). Positions 151, 152, 186, and 209 each coordinate 1-deoxy-D-xylulose 5-phosphate. A Mn(2+)-binding site is contributed by glutamate 152. Position 215 (glycine 215) interacts with NADPH. Positions 222, 227, 228, and 231 each coordinate 1-deoxy-D-xylulose 5-phosphate. Position 231 (glutamate 231) interacts with Mn(2+).

The protein belongs to the DXR family. The cofactor is Mg(2+). Mn(2+) is required as a cofactor.

It carries out the reaction 2-C-methyl-D-erythritol 4-phosphate + NADP(+) = 1-deoxy-D-xylulose 5-phosphate + NADPH + H(+). It functions in the pathway isoprenoid biosynthesis; isopentenyl diphosphate biosynthesis via DXP pathway; isopentenyl diphosphate from 1-deoxy-D-xylulose 5-phosphate: step 1/6. With respect to regulation, inhibited by fosmidomycin. Functionally, catalyzes the NADPH-dependent rearrangement and reduction of 1-deoxy-D-xylulose-5-phosphate (DXP) to 2-C-methyl-D-erythritol 4-phosphate (MEP). This Synechococcus sp. (strain ATCC 27144 / PCC 6301 / SAUG 1402/1) (Anacystis nidulans) protein is 1-deoxy-D-xylulose 5-phosphate reductoisomerase.